The sequence spans 148 residues: 3-dehydroquinate dehydratase (148 aa).

Residue Tyr23 is the Proton acceptor of the active site. 3 residues coordinate substrate: Asn74, His80, and Asp87. Residue His100 is the Proton donor of the active site. Substrate is bound by residues 101-102 (IS) and Arg111.

Belongs to the type-II 3-dehydroquinase family. As to quaternary structure, homododecamer.

The enzyme catalyses 3-dehydroquinate = 3-dehydroshikimate + H2O. The protein operates within metabolic intermediate biosynthesis; chorismate biosynthesis; chorismate from D-erythrose 4-phosphate and phosphoenolpyruvate: step 3/7. Functionally, catalyzes a trans-dehydration via an enolate intermediate. In Anoxybacillus flavithermus (strain DSM 21510 / WK1), this protein is 3-dehydroquinate dehydratase.